The primary structure comprises 277 residues: Diaminopimelate epimerase (277 aa).

3 residues coordinate substrate: asparagine 13, glutamine 46, and asparagine 66. The Proton donor role is filled by cysteine 75. Substrate contacts are provided by residues 76 to 77 (GN), asparagine 160, asparagine 193, and 211 to 212 (ER). Residue cysteine 220 is the Proton acceptor of the active site. 221–222 (GS) is a binding site for substrate.

This sequence belongs to the diaminopimelate epimerase family. In terms of assembly, homodimer.

The protein resides in the cytoplasm. The catalysed reaction is (2S,6S)-2,6-diaminopimelate = meso-2,6-diaminopimelate. Its pathway is amino-acid biosynthesis; L-lysine biosynthesis via DAP pathway; DL-2,6-diaminopimelate from LL-2,6-diaminopimelate: step 1/1. Catalyzes the stereoinversion of LL-2,6-diaminopimelate (L,L-DAP) to meso-diaminopimelate (meso-DAP), a precursor of L-lysine and an essential component of the bacterial peptidoglycan. This Legionella pneumophila (strain Lens) protein is Diaminopimelate epimerase.